Consider the following 283-residue polypeptide: DegV domain-containing protein CPE0304 (283 aa).

In terms of domain architecture, DegV spans 3 to 281; it reads VKVITDSTSC…VKSVGIAYAR (279 aa). Residues serine 60 and serine 92 each contribute to the hexadecanoate site.

In terms of biological role, may bind long-chain fatty acids, such as palmitate, and may play a role in lipid transport or fatty acid metabolism. This Clostridium perfringens (strain 13 / Type A) protein is DegV domain-containing protein CPE0304.